A 363-amino-acid polypeptide reads, in one-letter code: MNASQQIHVFSSHWKVESVIISLIFSMIFLVGTVGNCLVLAVLIRNGQMNTKSTNLFILNLGLADLCFIVFCVPLQATIYTMDEWVFGAFVCKAVHFIIYLTMYASIFTLAAVSLDRYLAIRYPLRSRETRTPRNALTSISLVWALSLFFSSPYLSYYQQMDLDGTTVCIPAWSVHHRQAMDICTFIFGYLIPVLILGITYARTIRYLWTSVDPMQDMSESRKAKRKVTKMIIIVAVLFCLCWLPHHLVILCMWFGHFPLNHTTYVLRILSHLVAYANSCLNPIVYALVSKHFRKGFKKVFGCAFRNRVVNRIHTVQPAQTVSLMEAASSEGSNHCDGSTRGRLWSKSSKKMMTSAFMTFNVT.

Residues 1–23 (MNASQQIHVFSSHWKVESVIISL) are Extracellular-facing. A helical membrane pass occupies residues 24-44 (IFSMIFLVGTVGNCLVLAVLI). The Cytoplasmic portion of the chain corresponds to 45–54 (RNGQMNTKST). The helical transmembrane segment at 55–75 (NLFILNLGLADLCFIVFCVPL) threads the bilayer. Residues 76 to 94 (QATIYTMDEWVFGAFVCKA) are Extracellular-facing. C92 and C169 are joined by a disulfide. A helical membrane pass occupies residues 95–115 (VHFIIYLTMYASIFTLAAVSL). The Cytoplasmic portion of the chain corresponds to 116–135 (DRYLAIRYPLRSRETRTPRN). Residues 136-156 (ALTSISLVWALSLFFSSPYLS) traverse the membrane as a helical segment. Over 157–179 (YYQQMDLDGTTVCIPAWSVHHRQ) the chain is Extracellular. A helical transmembrane segment spans residues 180–200 (AMDICTFIFGYLIPVLILGIT). Over 201–230 (YARTIRYLWTSVDPMQDMSESRKAKRKVTK) the chain is Cytoplasmic. A helical transmembrane segment spans residues 231–251 (MIIIVAVLFCLCWLPHHLVIL). Over 252–268 (CMWFGHFPLNHTTYVLR) the chain is Extracellular. Residues 269–289 (ILSHLVAYANSCLNPIVYALV) traverse the membrane as a helical segment. Over 290-363 (SKHFRKGFKK…TSAFMTFNVT (74 aa)) the chain is Cytoplasmic.

The protein belongs to the G-protein coupled receptor 1 family. In terms of tissue distribution, expressed in neurons in the ventral area of the interpeduncular nucleus (IPN) where expression often overlaps with spx1.

It localises to the membrane. Functionally, receptor for the hormone galanin. Receptor for the hormones spexin-1 and spexin-2. The sequence is that of Galanin receptor 2a from Danio rerio (Zebrafish).